The sequence spans 509 residues: MNLLDPFMKMTDEQEKGLSGAPSPTMSEDSAGSPCPSGSGSDTENTRPQENTFPKGEPDLKKESEEDKFPVCIREAVSQVLKGYDWTLVPMPVRVNGSSKNKPHVKRPMNAFMVWAQAARRKLADQYPHLHNAELSKTLGKLWRLLNESEKRPFVEEAERLRVQHKKDHPDYKYQPRRRKSVKNGQAEAEEATEQTHISPNAIFKALQADSPHSSSGMSEVHSPGEHSGQSQGPPTPPTTPKTDVQPGKADLKREGRPLPEGGRQPPIDFRDVDIGELSSDVISNIETFDVNEFDQYLPPNGHPGVPATHGQVTYTGSYGISSTAATPASAGHVWMSKQQAPPPPPQQPPQAPPAPQAPPQPQAAPPQQPAAPPQQPQAHTLTTLSSEPGQSQRTHIKTEQLSPSHYSEQQQHSPQQIAYSPFNLPHYSPSYPPITRSQYDYTDHQNSSSYYSHAAGQGTGLYSTFTYMNPAQRPMYTPIADTSGVPSIPQTHSPQHWEQPVYTQLTRP.

Disordered regions lie at residues 1-67 (MNLL…SEED) and 160-273 (RLRV…FRDV). Over residues 30 to 41 (SAGSPCPSGSGS) the composition is skewed to low complexity. Over residues 42–52 (DTENTRPQENT) the composition is skewed to polar residues. Composition is skewed to basic and acidic residues over residues 56–67 (GEPDLKKESEED) and 160–174 (RLRVQHKKDHPDYKY). Residues 63-103 (ESEEDKFPVCIREAVSQVLKGYDWTLVPMPVRVNGSSKNKP) form a dimerization (DIM) region. The PQA stretch occupies residues 63–103 (ESEEDKFPVCIREAVSQVLKGYDWTLVPMPVRVNGSSKNKP). Residue S64 is modified to Phosphoserine. Positions 105 to 173 (VKRPMNAFMV…QHKKDHPDYK (69 aa)) form a DNA-binding region, HMG box. Residue S211 is modified to Phosphoserine. The tract at residues 224-307 (PGEHSGQSQG…LPPNGHPGVP (84 aa)) is transactivation domain (TAM). 2 consecutive short sequence motifs (9aaTAD) follow at residues 275–284 (IGELSSDVIS) and 290–298 (DVNEFDQYL). The interval 330 to 415 (SAGHVWMSKQ…HYSEQQQHSP (86 aa)) is disordered. Over residues 341–376 (APPPPPQQPPQAPPAPQAPPQPQAAPPQQPAAPPQQ) the composition is skewed to pro residues. The span at 380–415 (HTLTTLSSEPGQSQRTHIKTEQLSPSHYSEQQQHSP) shows a compositional bias: polar residues. The tract at residues 394–509 (RTHIKTEQLS…QPVYTQLTRP (116 aa)) is transactivation domain (TAC). K398 participates in a covalent cross-link: Glycyl lysine isopeptide (Lys-Gly) (interchain with G-Cter in ubiquitin). The 9aaTAD 3 motif lies at 460-468 (TGLYSTFTY). Residues 479–509 (PIADTSGVPSIPQTHSPQHWEQPVYTQLTRP) are disordered. Residues 485 to 509 (GVPSIPQTHSPQHWEQPVYTQLTRP) show a composition bias toward polar residues.

Homodimer; homodimerization is required for activity. Interacts (via C-terminus) with ZNF219; forming a complex that binds to the COL2A1 promoter and activates COL2A1 expression. Interacts with DDRGK1. Interacts with EP300/p300. Interacts with beta-catenin (CTNNB1); inhibiting CTNNB1 activity by competing with the binding sites of TCF/LEF within CTNNB1. In terms of processing, acetylated; acetylation impairs nuclear localization and ability to transactivate expression of target genes. Deacetylated by SIRT1. Phosphorylation at Ser-64 and Ser-211 by PKA increases transcriptional activity and may help delay chondrocyte maturation downstream of PTHLH/PTHrP signaling. Phosphorylation at either Ser-64 or Ser-211 is required for sumoylation, but phosphorylation is not dependent on sumoylation. Phosphorylated on tyrosine residues; tyrosine dephosphorylation by PTPN11/SHP2 blocks SOX9 phosphorylation by PKA and subsequent SUMOylation. Post-translationally, ubiquitinated; ubiquitination leads to proteasomal degradation and is negatively regulated by DDRGK1. In terms of processing, sumoylated; phosphorylation at either Ser-64 or Ser-211 is required for sumoylation. Sumoylation is induced by BMP signaling pathway.

Its subcellular location is the nucleus. Its function is as follows. Transcription factor that plays a key role in chondrocytes differentiation and skeletal development. Specifically binds the 5'-ACAAAG-3' DNA motif present in enhancers and super-enhancers and promotes expression of genes important for chondrogenesis, including cartilage matrix protein-coding genes COL2A1, COL4A2, COL9A1, COL11A2 and ACAN, SOX5 and SOX6. Also binds to some promoter regions. Plays a central role in successive steps of chondrocyte differentiation. Absolutely required for precartilaginous condensation, the first step in chondrogenesis during which skeletal progenitors differentiate into prechondrocytes. Together with SOX5 and SOX6, required for overt chondrogenesis when condensed prechondrocytes differentiate into early stage chondrocytes, the second step in chondrogenesis. Later, required to direct hypertrophic maturation and block osteoblast differentiation of growth plate chondrocytes: maintains chondrocyte columnar proliferation, delays prehypertrophy and then prevents osteoblastic differentiation of chondrocytes by lowering beta-catenin (CTNNB1) signaling and RUNX2 expression. Also required for chondrocyte hypertrophy, both indirectly, by keeping the lineage fate of chondrocytes, and directly, by remaining present in upper hypertrophic cells and transactivating COL10A1 along with MEF2C. Low lipid levels are the main nutritional determinant for chondrogenic commitment of skeletal progenitor cells: when lipids levels are low, FOXO (FOXO1 and FOXO3) transcription factors promote expression of SOX9, which induces chondrogenic commitment and suppresses fatty acid oxidation. Mechanistically, helps, but is not required, to remove epigenetic signatures of transcriptional repression and deposit active promoter and enhancer marks at chondrocyte-specific genes. Acts in cooperation with the Hedgehog pathway-dependent GLI (GLI1 and GLI3) transcription factors. In addition to cartilage development, also acts as a regulator of proliferation and differentiation in epithelial stem/progenitor cells: involved in the lung epithelium during branching morphogenesis, by balancing proliferation and differentiation and regulating the extracellular matrix. Controls epithelial branching during kidney development. The chain is Transcription factor SOX-9 from Homo sapiens (Human).